Consider the following 284-residue polypeptide: Nucleotide-binding protein Shewmr7_3352 (284 aa).

Residue Gly-8–Ser-15 participates in ATP binding. Asp-56–Asn-59 lines the GTP pocket.

Belongs to the RapZ-like family.

Functionally, displays ATPase and GTPase activities. The sequence is that of Nucleotide-binding protein Shewmr7_3352 from Shewanella sp. (strain MR-7).